Here is a 499-residue protein sequence, read N- to C-terminus: Phenylalanine--tRNA ligase alpha subunit (499 aa).

L-phenylalanine contacts are provided by residues Thr330, 372 to 374, and Tyr412; that span reads QVE. Residue Glu414 coordinates Mg(2+). Phe438 is a binding site for L-phenylalanine.

This sequence belongs to the class-II aminoacyl-tRNA synthetase family. Phe-tRNA synthetase alpha subunit type 2 subfamily. Tetramer of two alpha and two beta subunits. Mg(2+) is required as a cofactor.

It is found in the cytoplasm. The enzyme catalyses tRNA(Phe) + L-phenylalanine + ATP = L-phenylalanyl-tRNA(Phe) + AMP + diphosphate + H(+). The chain is Phenylalanine--tRNA ligase alpha subunit (frs2) from Schizosaccharomyces pombe (strain 972 / ATCC 24843) (Fission yeast).